Here is an 886-residue protein sequence, read N- to C-terminus: Vam6/Vps39-like protein (886 aa).

One can recognise a CNH domain in the interval 15 to 294 (PLQIDCLAAW…RFITSGGSNI (280 aa)). The CHCR repeat unit spans residues 573–750 (FTEDLPEVES…LLRMYLSPPS (178 aa)).

The protein belongs to the VAM6/VPS39 family. In terms of assembly, homooligomer. Interacts with TGFBR2 and, less efficiently, with TGFBR1; interaction with TGFBR2 is independent of the receptor kinase activity and of the presence of TGF-beta. Also interacts with ACVR2B, but not with BMPR2. Interacts with SMAD4, preferentially following TGF-beta treatment. Component of the putative homotypic fusion and vacuole protein sorting (HOPS) complex; the core of which composed of the class C Vps proteins VPS11, VPS16, VPS18 and VPS33A, is associated with VPS39 and VPS41. Interacts with PLEKHM2; involved in VPS39 recruitment to ARL8B-containing lysosomes. Associates with adapter protein complex 3 (AP-3) and clathrin:AP-3 complexes. Interacts with STX17; this interaction is increased in the absence of TMEM39A. Interacts with RAB7, RAB2A and RAB2B. Interacts with RAB2A (GTP-bound); the interaction contributes to obtaining a functional HOPS complex that promotes autophagosome-lysosome membrane fusion driven by STX17-SNAP29-VAMP8. Interacts with RAB39A (GTP-bound) and RAB39B (GTP-bound); interaction with RAB39A contributes to obtaining a functional HOPS complex.

It localises to the cytoplasm. It is found in the lysosome membrane. The protein localises to the late endosome membrane. In terms of biological role, regulator of TGF-beta/activin signaling, inhibiting SMAD3- and activating SMAD2-dependent transcription. Acts by interfering with SMAD3/SMAD4 complex formation, this would lead to inhibition of SMAD3-dependent transcription and relieve SMAD3 inhibition of SMAD2-dependent promoters, thus increasing SMAD2-dependent transcription. Functionally, plays a role in vesicle-mediated protein trafficking to lysosomal compartments including the endocytic membrane transport and autophagic pathways. Acts as a component of the HOPS endosomal tethering complex which is proposed to be involved in the Rab5-to-Rab7 endosome conversion probably implicating MON1A/B, and via binding SNAREs and SNARE complexes to mediate tethering and docking events during SNARE-mediated membrane fusion. The HOPS complex is proposed to be recruited to Rab7 on the late endosomal membrane and to regulate late endocytic, phagocytic and autophagic traffic towards lysosomes. Involved in homotypic vesicle fusions between late endosomes and in heterotypic fusions between late endosomes and lysosomes. Required for fusion of endosomes and autophagosomes with lysosomes. The sequence is that of Vam6/Vps39-like protein from Mus musculus (Mouse).